Here is a 295-residue protein sequence, read N- to C-terminus: Large ribosomal subunit protein uL29m (295 aa).

This sequence belongs to the universal ribosomal protein uL29 family. In terms of assembly, component of the mitochondrial large ribosomal subunit. Mature mitochondrial ribosomes consist of a small (37S) and a large (54S) subunit. The 37S subunit contains at least 33 different proteins and 1 molecule of RNA (15S). The 54S subunit contains at least 45 different proteins and 1 molecule of RNA (21S).

The protein resides in the mitochondrion. This is Large ribosomal subunit protein uL29m (MRPL4) from Meyerozyma guilliermondii (strain ATCC 6260 / CBS 566 / DSM 6381 / JCM 1539 / NBRC 10279 / NRRL Y-324) (Yeast).